The chain runs to 430 residues: Putative glycylpeptide N-tetradecanoyltransferase 2 (430 aa).

Residues 47–50 (HKFW), 181–183 (LCV), and 189–193 (SKGLA) each bind tetradecanoyl-CoA. Catalysis depends on Leu430, which acts as the Proton acceptor; via carboxylate.

Belongs to the NMT family.

The catalysed reaction is N-terminal glycyl-[protein] + tetradecanoyl-CoA = N-tetradecanoylglycyl-[protein] + CoA + H(+). Functionally, may add a myristoyl group to the N-terminal glycine residue of certain cellular proteins. The polypeptide is Putative glycylpeptide N-tetradecanoyltransferase 2 (NMT2) (Arabidopsis thaliana (Mouse-ear cress)).